Reading from the N-terminus, the 667-residue chain is Beta-galactosidase LacA (667 aa).

Arg109 serves as a coordination point for substrate. Cys113 is a binding site for Zn(2+). Asn147 provides a ligand contact to substrate. Glu148 (proton donor) is an active-site residue. Residues Cys153, Cys155, and Cys158 each coordinate Zn(2+). Glu307 (nucleophile) is an active-site residue. Residues Trp315 and 355–358 contribute to the substrate site; that span reads EKFH.

It belongs to the glycosyl hydrolase 42 family.

The catalysed reaction is Hydrolysis of terminal non-reducing beta-D-galactose residues in beta-D-galactosides.. Its function is as follows. Hydrolyzes lactose, oNP-galactoside (oNPG), pNP-galactosidase (pNPG), pNP-mannoside, pNP-glucoside, pNP-fucoside, pNP-N-acetylglucosamide, but not pNP-arabinoside or 4-methylumbelliferyl-beta-galactopyranoside (MUG). Transgalactosylates lactose at 10 g/L, but not at 270 g/L. This Lactobacillus acidophilus protein is Beta-galactosidase LacA.